Here is a 224-residue protein sequence, read N- to C-terminus: 2-C-methyl-D-erythritol 4-phosphate cytidylyltransferase (224 aa).

This sequence belongs to the IspD/TarI cytidylyltransferase family. IspD subfamily.

It catalyses the reaction 2-C-methyl-D-erythritol 4-phosphate + CTP + H(+) = 4-CDP-2-C-methyl-D-erythritol + diphosphate. Its pathway is isoprenoid biosynthesis; isopentenyl diphosphate biosynthesis via DXP pathway; isopentenyl diphosphate from 1-deoxy-D-xylulose 5-phosphate: step 2/6. Catalyzes the formation of 4-diphosphocytidyl-2-C-methyl-D-erythritol from CTP and 2-C-methyl-D-erythritol 4-phosphate (MEP). The protein is 2-C-methyl-D-erythritol 4-phosphate cytidylyltransferase of Saccharopolyspora erythraea (strain ATCC 11635 / DSM 40517 / JCM 4748 / NBRC 13426 / NCIMB 8594 / NRRL 2338).